The primary structure comprises 170 residues: Large ribosomal subunit protein uL11 (170 aa).

It belongs to the universal ribosomal protein uL11 family. As to quaternary structure, part of the ribosomal stalk of the 50S ribosomal subunit. Interacts with L10 and the large rRNA to form the base of the stalk. L10 forms an elongated spine to which L12 dimers bind in a sequential fashion forming a multimeric L10(L12)X complex.

Forms part of the ribosomal stalk which helps the ribosome interact with GTP-bound translation factors. The polypeptide is Large ribosomal subunit protein uL11 (Sulfolobus acidocaldarius (strain ATCC 33909 / DSM 639 / JCM 8929 / NBRC 15157 / NCIMB 11770)).